The primary structure comprises 266 residues: 3-deoxy-manno-octulosonate cytidylyltransferase (266 aa).

Belongs to the KdsB family.

The protein localises to the cytoplasm. It carries out the reaction 3-deoxy-alpha-D-manno-oct-2-ulosonate + CTP = CMP-3-deoxy-beta-D-manno-octulosonate + diphosphate. Its pathway is nucleotide-sugar biosynthesis; CMP-3-deoxy-D-manno-octulosonate biosynthesis; CMP-3-deoxy-D-manno-octulosonate from 3-deoxy-D-manno-octulosonate and CTP: step 1/1. The protein operates within bacterial outer membrane biogenesis; lipopolysaccharide biosynthesis. In terms of biological role, activates KDO (a required 8-carbon sugar) for incorporation into bacterial lipopolysaccharide in Gram-negative bacteria. In Paraburkholderia xenovorans (strain LB400), this protein is 3-deoxy-manno-octulosonate cytidylyltransferase.